A 173-amino-acid chain; its full sequence is Translation initiation factor IF-3 (173 aa).

Belongs to the IF-3 family. As to quaternary structure, monomer.

The protein localises to the cytoplasm. IF-3 binds to the 30S ribosomal subunit and shifts the equilibrium between 70S ribosomes and their 50S and 30S subunits in favor of the free subunits, thus enhancing the availability of 30S subunits on which protein synthesis initiation begins. This Aromatoleum aromaticum (strain DSM 19018 / LMG 30748 / EbN1) (Azoarcus sp. (strain EbN1)) protein is Translation initiation factor IF-3.